The following is a 280-amino-acid chain: Putative pyruvate, phosphate dikinase regulatory protein (280 aa).

149–156 provides a ligand contact to ADP; that stretch reads GVSRSSKT.

The protein belongs to the pyruvate, phosphate/water dikinase regulatory protein family. PDRP subfamily.

It carries out the reaction N(tele)-phospho-L-histidyl/L-threonyl-[pyruvate, phosphate dikinase] + ADP = N(tele)-phospho-L-histidyl/O-phospho-L-threonyl-[pyruvate, phosphate dikinase] + AMP + H(+). It catalyses the reaction N(tele)-phospho-L-histidyl/O-phospho-L-threonyl-[pyruvate, phosphate dikinase] + phosphate + H(+) = N(tele)-phospho-L-histidyl/L-threonyl-[pyruvate, phosphate dikinase] + diphosphate. In terms of biological role, bifunctional serine/threonine kinase and phosphorylase involved in the regulation of the pyruvate, phosphate dikinase (PPDK) by catalyzing its phosphorylation/dephosphorylation. This is Putative pyruvate, phosphate dikinase regulatory protein from Novosphingobium aromaticivorans (strain ATCC 700278 / DSM 12444 / CCUG 56034 / CIP 105152 / NBRC 16084 / F199).